A 244-amino-acid chain; its full sequence is tRNA pseudouridine synthase B (244 aa).

D46 serves as the catalytic Nucleophile.

The protein belongs to the pseudouridine synthase TruB family. Type 1 subfamily.

The enzyme catalyses uridine(55) in tRNA = pseudouridine(55) in tRNA. Responsible for synthesis of pseudouridine from uracil-55 in the psi GC loop of transfer RNAs. This chain is tRNA pseudouridine synthase B, found in Bordetella avium (strain 197N).